The primary structure comprises 269 residues: UPF0162 protein BU173 (269 aa).

This sequence belongs to the UPF0162 family.

This chain is UPF0162 protein BU173, found in Buchnera aphidicola subsp. Acyrthosiphon pisum (strain APS) (Acyrthosiphon pisum symbiotic bacterium).